The primary structure comprises 452 residues: Probable phosphoglucosamine mutase (452 aa).

Ser-96 functions as the Phosphoserine intermediate in the catalytic mechanism. 4 residues coordinate Mg(2+): Ser-96, Asp-233, Asp-235, and Asp-237. Ser-96 carries the post-translational modification Phosphoserine.

Belongs to the phosphohexose mutase family. Mg(2+) serves as cofactor. In terms of processing, activated by phosphorylation.

The enzyme catalyses alpha-D-glucosamine 1-phosphate = D-glucosamine 6-phosphate. Functionally, catalyzes the conversion of glucosamine-6-phosphate to glucosamine-1-phosphate. The sequence is that of Probable phosphoglucosamine mutase from Pyrococcus furiosus (strain ATCC 43587 / DSM 3638 / JCM 8422 / Vc1).